Reading from the N-terminus, the 493-residue chain is Probable protein phosphatase 2C 40 (493 aa).

The PPM-type phosphatase domain maps to 145–480 (LLSAMEVQVA…DDVTIMVITL (336 aa)). The Mn(2+) site is built by aspartate 180, glycine 181, aspartate 408, and aspartate 471.

Belongs to the PP2C family. It depends on Mg(2+) as a cofactor. Requires Mn(2+) as cofactor.

It catalyses the reaction O-phospho-L-seryl-[protein] + H2O = L-seryl-[protein] + phosphate. The catalysed reaction is O-phospho-L-threonyl-[protein] + H2O = L-threonyl-[protein] + phosphate. In Arabidopsis thaliana (Mouse-ear cress), this protein is Probable protein phosphatase 2C 40.